The following is a 156-amino-acid chain: Ribonuclease pancreatic (156 aa).

Residues 1–28 (MALEKSLALLPLLVLVLLVLGWVQPSLG) form the signal peptide. Substrate contacts are provided by lysine 35 and arginine 38. Histidine 40 acts as the Proton acceptor in catalysis. Intrachain disulfides connect cysteine 54-cysteine 112, cysteine 68-cysteine 123, cysteine 86-cysteine 138, and cysteine 93-cysteine 100. Asparagine 62 carries N-linked (GlcNAc...) asparagine glycosylation. 69-73 (KPVNT) lines the substrate pocket. Residue asparagine 90 is glycosylated (N-linked (GlcNAc...) asparagine). Residues lysine 94 and arginine 113 each coordinate substrate. Histidine 147 (proton donor) is an active-site residue.

The protein belongs to the pancreatic ribonuclease family. Monomer. Interacts with and forms tight 1:1 complexes with RNH1. Dimerization of two such complexes may occur. Interaction with RNH1 inhibits this protein.

It localises to the secreted. The catalysed reaction is an [RNA] containing cytidine + H2O = an [RNA]-3'-cytidine-3'-phosphate + a 5'-hydroxy-ribonucleotide-3'-[RNA].. It carries out the reaction an [RNA] containing uridine + H2O = an [RNA]-3'-uridine-3'-phosphate + a 5'-hydroxy-ribonucleotide-3'-[RNA].. In terms of biological role, endonuclease that catalyzes the cleavage of RNA on the 3' side of pyrimidine nucleotides. Acts on single-stranded and double-stranded RNA. The sequence is that of Ribonuclease pancreatic (RNASE1) from Lagothrix lagotricha (Brown woolly monkey).